Here is a 463-residue protein sequence, read N- to C-terminus: MHLHFTPRQIVEKLDQYIIGQKDAKKAVAVALRNRYRRSKLAENLRDEIAPKNILMIGPTGVGKTEVARRMAKLVGAPFIKVEATKFTEVGYVGRDVESMVRDLVETSVRIVKEEMVVKVQDKAEEQANQRLVEILVPSPEKQSGFKNPLEMLFGGAQNSNQTTDSQEDVEIEKKRQDVERKLAAGLLEDEIVSIEVTEQQSSMFDMLQGTGMEQMGMNFQDALGSFMPKKTKKRKLSVKEARKVLTNEEAQRLIDMDEVTQEAVYRAEQLGIIFIDEIDKIAGKQSNSVDVSREGVQRDILPIVEGSNVATKYGSVKTDYILFVAAGAFHMSKPSDLIPELQGRFPIRVELTKLSTDDFVKILIEPDNALIKQYMALLATEGIEIEFSDEAIRKIAEIAYQVNQDTDNIGARRLHTIMEKLLEDLSFEASEITLEKITITPQYVEEKLATIAKNKDVSQFIL.

ATP contacts are provided by residues I19, 61 to 66 (GVGKTE), D277, E341, and R413.

It belongs to the ClpX chaperone family. HslU subfamily. As to quaternary structure, a double ring-shaped homohexamer of HslV is capped on each side by a ring-shaped HslU homohexamer. The assembly of the HslU/HslV complex is dependent on binding of ATP.

The protein localises to the cytoplasm. Functionally, ATPase subunit of a proteasome-like degradation complex; this subunit has chaperone activity. The binding of ATP and its subsequent hydrolysis by HslU are essential for unfolding of protein substrates subsequently hydrolyzed by HslV. HslU recognizes the N-terminal part of its protein substrates and unfolds these before they are guided to HslV for hydrolysis. The chain is ATP-dependent protease ATPase subunit HslU from Bacillus cereus (strain 03BB102).